We begin with the raw amino-acid sequence, 452 residues long: Elongation factor Tu, mitochondrial (452 aa).

The N-terminal 43 residues, 1-43, are a transit peptide targeting the mitochondrion; sequence MAAATLLRATPRFSGLCASPTPFLQGRLRPLKAPASPFLCRGL. The 197-residue stretch at 55–251 folds into the tr-type G domain; that stretch reads KPHVNVGTIG…AVDTYIPVPT (197 aa). The tract at residues 64-71 is G1; that stretch reads GHVDHGKT. Residues Asp67, Gly69, Lys70, Thr71, and Thr72 each coordinate GTP. Residue Thr71 participates in Mg(2+) binding. Lys79 is subject to N6-acetyllysine. At Lys88 the chain carries N6-acetyllysine; alternate. Residue Lys88 is modified to N6-succinyllysine; alternate. The segment at 105–109 is G2; the sequence is GITIN. The tract at residues 126–129 is G3; sequence DCPG. GTP is bound by residues Asn181, Asp184, Ser219, Ala220, and Leu221. The interval 181–184 is G4; it reads NKAD. Residues 219–221 are G5; the sequence is SAL. Lys234 carries the N6-succinyllysine modification. An N6-acetyllysine modification is found at Lys256. At Thr278 the chain carries Phosphothreonine. The residue at position 286 (Lys286) is an N6-succinyllysine. Ser312 is subject to Phosphoserine. N6-acetyllysine is present on residues Lys361 and Lys418.

This sequence belongs to the TRAFAC class translation factor GTPase superfamily. Classic translation factor GTPase family. EF-Tu/EF-1A subfamily. Interacts with NLRX1. Interacts with ATG16L1.

The protein localises to the mitochondrion. The enzyme catalyses GTP + H2O = GDP + phosphate + H(+). Its function is as follows. GTP hydrolase that promotes the GTP-dependent binding of aminoacyl-tRNA to the A-site of ribosomes during protein biosynthesis. Also plays a role in the regulation of autophagy and innate immunity. Recruits ATG5-ATG12 and NLRX1 at mitochondria and serves as a checkpoint of the RIGI-MAVS pathway. In turn, inhibits RLR-mediated type I interferon while promoting autophagy. This is Elongation factor Tu, mitochondrial (Tufm) from Mus musculus (Mouse).